The sequence spans 481 residues: Proline--tRNA ligase (481 aa).

Belongs to the class-II aminoacyl-tRNA synthetase family. ProS type 3 subfamily. Homodimer.

Its subcellular location is the cytoplasm. It catalyses the reaction tRNA(Pro) + L-proline + ATP = L-prolyl-tRNA(Pro) + AMP + diphosphate. In terms of biological role, catalyzes the attachment of proline to tRNA(Pro) in a two-step reaction: proline is first activated by ATP to form Pro-AMP and then transferred to the acceptor end of tRNA(Pro). Can inadvertently accommodate and process cysteine. Misacylated Cys-tRNA(Pro) is not edited by ProRS; this function may be provided by ProX. The sequence is that of Proline--tRNA ligase (proS) from Acetoanaerobium sticklandii (strain ATCC 12662 / DSM 519 / JCM 1433 / CCUG 9281 / NCIMB 10654 / HF) (Clostridium sticklandii).